A 740-amino-acid chain; its full sequence is Elongation factor 2 (740 aa).

The 246-residue stretch at 18–263 (EQVRNIGIIA…MVVRWVPNPR (246 aa)) folds into the tr-type G domain. GTP is bound by residues 27–34 (AHVDHGKT), 93–97 (DTPGH), and 147–150 (NKVD). At His-606 the chain carries Diphthamide.

This sequence belongs to the TRAFAC class translation factor GTPase superfamily. Classic translation factor GTPase family. EF-G/EF-2 subfamily.

It is found in the cytoplasm. Catalyzes the GTP-dependent ribosomal translocation step during translation elongation. During this step, the ribosome changes from the pre-translocational (PRE) to the post-translocational (POST) state as the newly formed A-site-bound peptidyl-tRNA and P-site-bound deacylated tRNA move to the P and E sites, respectively. Catalyzes the coordinated movement of the two tRNA molecules, the mRNA and conformational changes in the ribosome. The sequence is that of Elongation factor 2 from Ignicoccus hospitalis (strain KIN4/I / DSM 18386 / JCM 14125).